The following is a 34-amino-acid chain: MSDIN-like toxin proprotein 5 (34 aa).

The propeptide occupies 1–10 (MSDINTARLP). Positions 11-20 (YVVFMSFIPP) form a cross-link, cyclopeptide (Tyr-Pro). Residues 21 to 34 (CVNDDIQVVLTRGE) constitute a propeptide that is removed on maturation.

This sequence belongs to the MSDIN fungal toxin family. Post-translationally, processed by the macrocyclase-peptidase enzyme POPB to yield a toxic cyclic decapeptide. POPB first removes 10 residues from the N-terminus. Conformational trapping of the remaining peptide forces the enzyme to release this intermediate rather than proceed to macrocyclization. The enzyme rebinds the remaining peptide in a different conformation and catalyzes macrocyclization of the N-terminal 10 residues.

In terms of biological role, probable toxin that belongs to the MSDIN-like toxin family responsible for a large number of food poisoning cases and deaths. In Amanita bisporigera (Destroying angel), this protein is MSDIN-like toxin proprotein 5.